A 548-amino-acid chain; its full sequence is mRNA cleavage and polyadenylation factor CLP1 (548 aa).

Residues glutamate 19, lysine 60, and 123 to 128 contribute to the ATP site; that span reads SSGKTT. Positions 437 to 478 are enriched in basic and acidic residues; the sequence is ESEVKEEVKEEKNEKDGEIKQDGEGEKKGEGKGEGEGEGEGK. A disordered region spans residues 437 to 500; the sequence is ESEVKEEVKE…DEEEVPFREE (64 aa). The segment covering 479 to 494 has biased composition (acidic residues); the sequence is DGEEEGEAEGEDDEEE.

Belongs to the Clp1 family. Clp1 subfamily. In terms of assembly, component of a pre-mRNA cleavage factor complex. Interacts directly with PCF11.

Its subcellular location is the nucleus. Functionally, required for endonucleolytic cleavage during polyadenylation-dependent pre-mRNA 3'-end formation. This chain is mRNA cleavage and polyadenylation factor CLP1, found in Cryptococcus neoformans var. neoformans serotype D (strain JEC21 / ATCC MYA-565) (Filobasidiella neoformans).